A 1035-amino-acid chain; its full sequence is Condensin complex subunit 3 (1035 aa).

HEAT repeat units lie at residues 113 to 150 and 153 to 191; these read RFVD…NIGE and ESLF…EEQT. At S198 the chain carries Phosphoserine. The stretch at 201 to 239 is one HEAT 3 repeat; it reads EENFEATRTLVASIQNDPSAEVRRAAMLNLINDNNTRPY. The disordered stretch occupies residues 500 to 536; sequence EEKIKSKKINRRNETSVDEEDENGTHNDEVNEDEEDD. 2 HEAT repeats span residues 597–635 and 827–864; these read ILIA…LDVK and VQLT…SSEQ. Residues 909-919 show a composition bias toward basic and acidic residues; the sequence is ERSETQTKDEN. 2 disordered regions span residues 909 to 934 and 959 to 995; these read ERSE…GNSF and TTVN…LENM. Composition is skewed to polar residues over residues 920–934 and 959–973; these read NTAN…GNSF and TTVN…TEQS. Residue S933 is modified to Phosphoserine. S981 carries the post-translational modification Phosphoserine. Residues 986 to 995 are compositionally biased toward polar residues; the sequence is IDTSKNLENM. At S1008 the chain carries Phosphoserine. The disordered stretch occupies residues 1012-1035; that stretch reads PDEKSDAMSIDEEDKDSESFSEVC.

It belongs to the CND3 (condensin subunit 3) family. In terms of assembly, component of the condensin complex, which contains the SMC2 and SMC4 heterodimer, and three non SMC subunits that probably regulate the complex: BRN1, YCS4 and YCG1/YCS5.

It is found in the nucleus. Its subcellular location is the cytoplasm. The protein localises to the chromosome. Regulatory subunit of the condensin complex, a complex required for conversion of interphase chromatin into mitotic-like condense chromosomes. The condensin complex probably introduces positive supercoils into relaxed DNA in the presence of type I topoisomerases and converts nicked DNA into positive knotted forms in the presence of type II topoisomerases. The condensin complex probably also plays a role during interphase. The polypeptide is Condensin complex subunit 3 (YCG1) (Saccharomyces cerevisiae (strain ATCC 204508 / S288c) (Baker's yeast)).